The following is a 71-amino-acid chain: MIRNLPEGTKAALRVRAARHHHSVEAEARAILTAGLLGEEVPMPVLLAADSGHDIDFEPERLGLIARTPQL.

Functionally, putative antitoxin component of a possible type II toxin-antitoxin (TA) system. The cognate toxin is VapB14. This Mycobacterium tuberculosis (strain ATCC 25618 / H37Rv) protein is Putative antitoxin VapB14 (vapB14).